The sequence spans 179 residues: Large ribosomal subunit protein uL6 (179 aa).

Basic and acidic residues predominate over residues 154-169; it reads EPYKGKGVKYEHEQIR. The disordered stretch occupies residues 154 to 179; it reads EPYKGKGVKYEHEQIRRKAGKSGGKK. A compositionally biased stretch (basic residues) spans 170–179; it reads RKAGKSGGKK.

This sequence belongs to the universal ribosomal protein uL6 family. Part of the 50S ribosomal subunit.

This protein binds to the 23S rRNA, and is important in its secondary structure. It is located near the subunit interface in the base of the L7/L12 stalk, and near the tRNA binding site of the peptidyltransferase center. This is Large ribosomal subunit protein uL6 from Oleidesulfovibrio alaskensis (strain ATCC BAA-1058 / DSM 17464 / G20) (Desulfovibrio alaskensis).